The chain runs to 127 residues: Fluoride-specific ion channel FluC (127 aa).

The next 4 helical transmembrane spans lie at 4–24 (SILA…FLGL), 36–56 (GTLL…AYFA), 68–88 (LIIT…AEVV), and 99–119 (AAGA…LGLF). Residues Gly75 and Thr78 each contribute to the Na(+) site.

Belongs to the fluoride channel Fluc/FEX (TC 1.A.43) family.

It localises to the cell inner membrane. It carries out the reaction fluoride(in) = fluoride(out). Its activity is regulated as follows. Na(+) is not transported, but it plays an essential structural role and its presence is essential for fluoride channel function. Its function is as follows. Fluoride-specific ion channel. Important for reducing fluoride concentration in the cell, thus reducing its toxicity. The sequence is that of Fluoride-specific ion channel FluC from Pseudomonas paraeruginosa (strain DSM 24068 / PA7) (Pseudomonas aeruginosa (strain PA7)).